The chain runs to 421 residues: Testin (421 aa).

The region spanning 92 to 199 (MILTNPVAAK…GDVKLPCEMD (108 aa)) is the PET domain. The tract at residues 133–164 (EKQPVAGSEGAQYRKKQLAKQLPAHDQDPSKC) is disordered. Basic and acidic residues predominate over residues 155 to 164 (PAHDQDPSKC). LIM zinc-binding domains are found at residues 234–297 (YSCY…CDSE), 299–359 (PRCA…NHAV), and 362–421 (QGCH…KMMS).

It belongs to the prickle / espinas / testin family. As to quaternary structure, interacts via LIM domain 1 with ZYX. Interacts (via LIM domain 3) with ENAH and VASP. Interacts with ALKBH4, talin, actin, alpha-actinin, GRIP1 and PXN. Interacts (via LIM domain 2) with ACTL7A (via N-terminus). Heterodimer with ACTL7A; the heterodimer interacts with ENAH to form a heterotrimer.

It localises to the cytoplasm. The protein localises to the cell junction. Its subcellular location is the focal adhesion. Scaffold protein that may play a role in cell adhesion, cell spreading and in the reorganization of the actin cytoskeleton. Plays a role in the regulation of cell proliferation. May act as a tumor suppressor. This chain is Testin (TES), found in Colobus guereza (Mantled guereza).